The chain runs to 162 residues: Ribonuclease P protein component (162 aa).

Residues 1–67 form a disordered region; the sequence is MDEKDLAAQP…GGKLVSLKGD (67 aa). A compositionally biased stretch (basic and acidic residues) spans 21-31; it reads GPHEDPRRQEG.

This sequence belongs to the RnpA family. Consists of a catalytic RNA component (M1 or rnpB) and a protein subunit.

The catalysed reaction is Endonucleolytic cleavage of RNA, removing 5'-extranucleotides from tRNA precursor.. RNaseP catalyzes the removal of the 5'-leader sequence from pre-tRNA to produce the mature 5'-terminus. It can also cleave other RNA substrates such as 4.5S RNA. The protein component plays an auxiliary but essential role in vivo by binding to the 5'-leader sequence and broadening the substrate specificity of the ribozyme. The polypeptide is Ribonuclease P protein component (Thermus brockianus).